A 253-amino-acid chain; its full sequence is MGQKINPVGLRLGINRTWDSRWFADGPEYGRLLHEDIKVRRALKKRLYQAGVSRIIIERPHKKCRITIYAARPGVIIGKKGADIEKLRKDVAAMTDGEVHLNIVEIRKPETDAQLIAENIAQQLERRVAFRRAMKRSMQSAMRLGAKGVRINVSGRLGGAEIARMEWYREGRVPLHTLRADVDYGFTEAKTTYGVIGVKVWVFKGEVLEHDPMALDKRLAGESGPAGEGGGRERGDRPDRGPRRERRGEPSNA.

Residues valine 39 to arginine 107 form the KH type-2 domain. The disordered stretch occupies residues leucine 215–alanine 253. Residues glycine 230–alanine 253 are compositionally biased toward basic and acidic residues.

Belongs to the universal ribosomal protein uS3 family. As to quaternary structure, part of the 30S ribosomal subunit. Forms a tight complex with proteins S10 and S14.

In terms of biological role, binds the lower part of the 30S subunit head. Binds mRNA in the 70S ribosome, positioning it for translation. The polypeptide is Small ribosomal subunit protein uS3 (Phenylobacterium zucineum (strain HLK1)).